Reading from the N-terminus, the 617-residue chain is Proline--tRNA ligase (617 aa).

Belongs to the class-II aminoacyl-tRNA synthetase family. ProS type 1 subfamily. As to quaternary structure, homodimer.

It is found in the cytoplasm. It catalyses the reaction tRNA(Pro) + L-proline + ATP = L-prolyl-tRNA(Pro) + AMP + diphosphate. Catalyzes the attachment of proline to tRNA(Pro) in a two-step reaction: proline is first activated by ATP to form Pro-AMP and then transferred to the acceptor end of tRNA(Pro). As ProRS can inadvertently accommodate and process non-cognate amino acids such as alanine and cysteine, to avoid such errors it has two additional distinct editing activities against alanine. One activity is designated as 'pretransfer' editing and involves the tRNA(Pro)-independent hydrolysis of activated Ala-AMP. The other activity is designated 'posttransfer' editing and involves deacylation of mischarged Ala-tRNA(Pro). The misacylated Cys-tRNA(Pro) is not edited by ProRS. The protein is Proline--tRNA ligase of Streptococcus agalactiae serotype III (strain NEM316).